A 153-amino-acid polypeptide reads, in one-letter code: Glucose-6-phosphate 1-dehydrogenase (153 aa).

NADP(+) contacts are provided by Arg21 and Lys120. Residue Lys120 participates in D-glucose 6-phosphate binding.

The protein belongs to the glucose-6-phosphate dehydrogenase family.

It is found in the cytoplasm. Its subcellular location is the cytosol. It catalyses the reaction D-glucose 6-phosphate + NADP(+) = 6-phospho-D-glucono-1,5-lactone + NADPH + H(+). It functions in the pathway carbohydrate degradation; pentose phosphate pathway; D-ribulose 5-phosphate from D-glucose 6-phosphate (oxidative stage): step 1/3. Functionally, cytosolic glucose-6-phosphate dehydrogenase that catalyzes the first and rate-limiting step of the oxidative branch within the pentose phosphate pathway/shunt, an alternative route to glycolysis for the dissimilation of carbohydrates and a major source of reducing power and metabolic intermediates for fatty acid and nucleic acid biosynthetic processes. The chain is Glucose-6-phosphate 1-dehydrogenase (ZW) from Culex pipiens (House mosquito).